The sequence spans 105 residues: Urease subunit beta (105 aa).

It belongs to the urease beta subunit family. In terms of assembly, heterotrimer of UreA (gamma), UreB (beta) and UreC (alpha) subunits. Three heterotrimers associate to form the active enzyme.

The protein localises to the cytoplasm. It catalyses the reaction urea + 2 H2O + H(+) = hydrogencarbonate + 2 NH4(+). The protein operates within nitrogen metabolism; urea degradation; CO(2) and NH(3) from urea (urease route): step 1/1. The sequence is that of Urease subunit beta from Pseudomonas putida (strain W619).